We begin with the raw amino-acid sequence, 275 residues long: MTLQQEIIQALGAKPHINPEEEIRRSVDFLKAYLKTYPFLKSLVLGISGGQDSTLAGKLSQMAIAELREETGDNALQFIAVRLPYGVQADEQDCQDAIAFIQPDRVLTVNIKGAVLASEQALREAGIELSDFVRGNEKARERMKAQYSIAGMTHGVVVGTDHAAEAITGFFTKYGDGGTDINPLHRLNKRQGKQLLAALGCPEHLYKKVPTADLEDDRPSLPDEAALGVTYDNIDDYLEGKTLDPAIAKTIEGWYVKTEHKRRLPITVFDDFWKR.

Residue 46–53 participates in ATP binding; it reads GISGGQDS. Asp52 lines the Mg(2+) pocket. Arg140 is a deamido-NAD(+) binding site. Thr160 contributes to the ATP binding site. Glu165 provides a ligand contact to Mg(2+). Positions 173 and 180 each coordinate deamido-NAD(+). ATP contacts are provided by Lys189 and Thr211. 260 to 261 is a binding site for deamido-NAD(+); that stretch reads HK.

The protein belongs to the NAD synthetase family. As to quaternary structure, homodimer.

The enzyme catalyses deamido-NAD(+) + NH4(+) + ATP = AMP + diphosphate + NAD(+) + H(+). The protein operates within cofactor biosynthesis; NAD(+) biosynthesis; NAD(+) from deamido-NAD(+) (ammonia route): step 1/1. Functionally, catalyzes the ATP-dependent amidation of deamido-NAD to form NAD. Uses ammonia as a nitrogen source. This is NH(3)-dependent NAD(+) synthetase from Salmonella choleraesuis (strain SC-B67).